The primary structure comprises 183 residues: Dual-action ribosomal maturation protein DarP (183 aa).

This sequence belongs to the DarP family.

It localises to the cytoplasm. Its function is as follows. Member of a network of 50S ribosomal subunit biogenesis factors which assembles along the 30S-50S interface, preventing incorrect 23S rRNA structures from forming. Promotes peptidyl transferase center (PTC) maturation. The sequence is that of Dual-action ribosomal maturation protein DarP from Shigella flexneri.